The chain runs to 315 residues: MNEIRTKVQIVDIDEDMAGQRIDNFLRNQLKDVPKSMIYRIVRKGEVRVNKKRVKAEYKLAAGDVVRIPPVTLEKKDPETAPSTKLNKVAELQDLIIYEDDHLLVLNKPSGTAVHGGSGLKFGAIEALRALRPEARFLELVHRIDRDTSGILLVAKKRSALRHLQAQFREKTVQKYYFALVMGEWKNSCKVVNAPLLKNEVNSIVRVNPNGKPSETRFKVIEKFPQATLVQASPITGRTHQIRVHTQYSGHPIAWDDRYGDRRFDAYTAQHGLNRLFLHAANIRFTHPATEQPMEINAPMGEQLEKVVQSLRTSR.

Residues 20–93 (QRIDNFLRNQ…TKLNKVAELQ (74 aa)) enclose the S4 RNA-binding domain. Residue D145 is part of the active site.

It belongs to the pseudouridine synthase RluA family.

It catalyses the reaction uridine(955/2504/2580) in 23S rRNA = pseudouridine(955/2504/2580) in 23S rRNA. In terms of biological role, responsible for synthesis of pseudouridine from uracil at positions 955, 2504 and 2580 in 23S ribosomal RNA. This Vibrio vulnificus (strain CMCP6) protein is Ribosomal large subunit pseudouridine synthase C (rluC).